A 718-amino-acid chain; its full sequence is Glycine--tRNA ligase beta subunit (718 aa).

Belongs to the class-II aminoacyl-tRNA synthetase family. As to quaternary structure, tetramer of two alpha and two beta subunits.

Its subcellular location is the cytoplasm. The enzyme catalyses tRNA(Gly) + glycine + ATP = glycyl-tRNA(Gly) + AMP + diphosphate. This Mesorhizobium japonicum (strain LMG 29417 / CECT 9101 / MAFF 303099) (Mesorhizobium loti (strain MAFF 303099)) protein is Glycine--tRNA ligase beta subunit.